The chain runs to 94 residues: MAGPKRFNKDKRPKRNTQSLLFKRKRFCRFTAAGVEEIDYKDIDTLRDFVSENGKIIPARLTGTRAIFQRQINTAVKRARFLAMLPYSDQHRSL.

This sequence belongs to the bacterial ribosomal protein bS18 family. Part of the 30S ribosomal subunit. Forms a tight heterodimer with protein bS6.

Binds as a heterodimer with protein bS6 to the central domain of the 16S rRNA, where it helps stabilize the platform of the 30S subunit. The chain is Small ribosomal subunit protein bS18 from Polaromonas naphthalenivorans (strain CJ2).